The primary structure comprises 444 residues: MGGPRAWTLLCLGLLLPGGGAAWSVPGARFSGRRNWCSYVVTRTVSCHVQNGTYLQRVLQNCPWPMGCPGNSYRTVVRPLYKVTYKTVTAREWRCCPGHSGVTCEEGSPGLLEPTWTDSGMRRMAVRPTALSGCLNCSKVSELTERLKALEAKVAVLSVTEQTVPSVPATPEDSALLWGSPAARGSPGDGSLQDRLDSWGLPGPTGPKGGTDSQSPVRIRGPPGPQGPPGRPGQTGAAGTPGKMGPPGPPGPPGPPGPPAPVGPPYGQVSLHGDPLLSNTFTEMGSHWPQGPTGPPGPPGPPGPMGPPGLPGPMGAPGSPGHMGIPGPSGPKGTSGHPGEKGERGLPGEPGPQGLMGVPGEPGPKGDPGEKSHWGEGLHQLREALKILAERVLILETMIGLYEPDLGSGAGPDGTGTPSLLRGKRGGHPTNYPIITPRRRSERS.

Residues 1 to 22 form the signal peptide; it reads MGGPRAWTLLCLGLLLPGGGAA. One can recognise an EMI domain in the interval 33-106; it reads RRNWCSYVVT…PGHSGVTCEE (74 aa). 3 disulfide bridges follow: Cys37–Cys96, Cys62–Cys68, and Cys95–Cys104. Thr42 carries an O-linked (Fuc) threonine glycan. N-linked (GlcNAc...) asparagine glycosylation is present at Asn51. Asn136 carries N-linked (GlcNAc...) asparagine glycosylation. Disordered regions lie at residues 161–374 and 404–444; these read EQTV…KSHW and PDLG…SERS. One can recognise a Collagen-like domain in the interval 221 to 371; that stretch reads GPPGPQGPPG…PGPKGDPGEK (151 aa). Residues 222–231 are compositionally biased toward pro residues; that stretch reads PPGPQGPPGR. The span at 232 to 243 shows a compositional bias: low complexity; it reads PGQTGAAGTPGK. Pro residues-rich tracts occupy residues 244 to 264 and 292 to 311; these read MGPP…PVGP and PTGP…PGLP.

Homo- or heteromers. O-fucosylated at Thr-42 within the EMI domain by FUT10/POFUT3 and FUT11/POFUT4.

The protein resides in the secreted. Its subcellular location is the extracellular space. The protein localises to the extracellular matrix. The sequence is that of EMI domain-containing protein 1 (Emid1) from Mus musculus (Mouse).